A 109-amino-acid polypeptide reads, in one-letter code: Protein phosphatase 1 regulatory subunit 1C (109 aa).

Residues 25–109 (AEQIRKRRPT…TNEREEQRDH (85 aa)) form a disordered region. Residues 45–54 (NPPEIDDKRV) show a composition bias toward basic and acidic residues. The segment covering 55–75 (PNTQGELQNASPKQRKQSVYT) has biased composition (polar residues). Positions 100–109 (TNEREEQRDH) are enriched in basic and acidic residues.

The protein belongs to the protein phosphatase inhibitor 1 family.

The protein resides in the cytoplasm. In terms of biological role, may increase cell susceptibility to TNF-induced apoptosis. This Pongo abelii (Sumatran orangutan) protein is Protein phosphatase 1 regulatory subunit 1C (PPP1R1C).